Here is a 368-residue protein sequence, read N- to C-terminus: tRNA/tmRNA (uracil-C(5))-methyltransferase (368 aa).

Q192, Y220, N225, E241, and D301 together coordinate S-adenosyl-L-methionine. C326 functions as the Nucleophile in the catalytic mechanism. Residue E360 is the Proton acceptor of the active site.

The protein belongs to the class I-like SAM-binding methyltransferase superfamily. RNA M5U methyltransferase family. TrmA subfamily.

It carries out the reaction uridine(54) in tRNA + S-adenosyl-L-methionine = 5-methyluridine(54) in tRNA + S-adenosyl-L-homocysteine + H(+). It catalyses the reaction uridine(341) in tmRNA + S-adenosyl-L-methionine = 5-methyluridine(341) in tmRNA + S-adenosyl-L-homocysteine + H(+). Dual-specificity methyltransferase that catalyzes the formation of 5-methyluridine at position 54 (m5U54) in all tRNAs, and that of position 341 (m5U341) in tmRNA (transfer-mRNA). The protein is tRNA/tmRNA (uracil-C(5))-methyltransferase of Actinobacillus pleuropneumoniae serotype 3 (strain JL03).